A 513-amino-acid chain; its full sequence is GMP synthase [glutamine-hydrolyzing] (513 aa).

Residues 8–198 (KIIVLDYGSQ…ALNTCGAKGN (191 aa)) enclose the Glutamine amidotransferase type-1 domain. Cysteine 85 functions as the Nucleophile in the catalytic mechanism. Residues histidine 172 and glutamate 174 contribute to the active site. One can recognise a GMPS ATP-PPase domain in the interval 199-388 (WSMENFIDMQ…LGMPDEIVWR (190 aa)). Residue 226–232 (SGGVDSS) coordinates ATP.

In terms of assembly, homodimer.

It carries out the reaction XMP + L-glutamine + ATP + H2O = GMP + L-glutamate + AMP + diphosphate + 2 H(+). The protein operates within purine metabolism; GMP biosynthesis; GMP from XMP (L-Gln route): step 1/1. Its function is as follows. Catalyzes the synthesis of GMP from XMP. This Lactococcus lactis subsp. cremoris (strain SK11) protein is GMP synthase [glutamine-hydrolyzing].